Here is a 207-residue protein sequence, read N- to C-terminus: Ribosomal RNA small subunit methyltransferase G (207 aa).

S-adenosyl-L-methionine-binding positions include glycine 76, glutamine 81, 127–128 (VE), and arginine 141.

This sequence belongs to the methyltransferase superfamily. RNA methyltransferase RsmG family.

The protein resides in the cytoplasm. The enzyme catalyses guanosine(527) in 16S rRNA + S-adenosyl-L-methionine = N(7)-methylguanosine(527) in 16S rRNA + S-adenosyl-L-homocysteine. Its function is as follows. Specifically methylates the N7 position of guanine in position 527 of 16S rRNA. This Neisseria meningitidis serogroup A / serotype 4A (strain DSM 15465 / Z2491) protein is Ribosomal RNA small subunit methyltransferase G.